The following is a 445-amino-acid chain: Xylose isomerase (445 aa).

Residues His99 and Asp102 contribute to the active site. Residues Glu230, Glu266, His269, Asp294, Asp305, Asp307, and Asp337 each coordinate Mg(2+).

This sequence belongs to the xylose isomerase family. In terms of assembly, homotetramer. Mg(2+) serves as cofactor.

It localises to the cytoplasm. The catalysed reaction is alpha-D-xylose = alpha-D-xylulofuranose. The chain is Xylose isomerase from Geobacillus thermodenitrificans (strain NG80-2).